We begin with the raw amino-acid sequence, 429 residues long: Glutamate-1-semialdehyde 2,1-aminomutase 2 (429 aa).

Lysine 268 is modified (N6-(pyridoxal phosphate)lysine).

It belongs to the class-III pyridoxal-phosphate-dependent aminotransferase family. HemL subfamily. As to quaternary structure, homodimer. Requires pyridoxal 5'-phosphate as cofactor.

It is found in the cytoplasm. The enzyme catalyses (S)-4-amino-5-oxopentanoate = 5-aminolevulinate. It functions in the pathway porphyrin-containing compound metabolism; protoporphyrin-IX biosynthesis; 5-aminolevulinate from L-glutamyl-tRNA(Glu): step 2/2. The polypeptide is Glutamate-1-semialdehyde 2,1-aminomutase 2 (Staphylococcus epidermidis (strain ATCC 35984 / DSM 28319 / BCRC 17069 / CCUG 31568 / BM 3577 / RP62A)).